Consider the following 1136-residue polypeptide: 3-O-alpha-D-galactosyl-alpha-L-arabinofuranosidase (1136 aa).

A signal peptide spans 1-36 (MGISRNRLVPGLVGLAASAAIVLPLGIGMPVSSATA). The active-site Proton donor is E194. The active-site Nucleophile is E321. 2 CBM6 domains span residues 521 to 656 (QAIE…LLLY) and 669 to 779 (VTYP…VTTA). The region spanning 987–1045 (KASLKVGETLSLNASVTPDSVADKTVQWTSSDEQVATVDEHGVVKGVKAGTVTITATSV) is the BIG2 domain. A disordered region spans residues 1049 to 1104 (SRSGSVEVTVAEDSEQKPSGGDGDNNGEQTGKPDGNTGGQTSDSDAGADSGNNQKH). Positions 1087–1103 (GQTSDSDAGADSGNNQK) are enriched in polar residues. The chain crosses the membrane as a helical span at residues 1109–1129 (GAAVAAVAGVAVLLAGAGLLL).

Belongs to the glycosyl hydrolase 39 family.

The protein localises to the cell membrane. Its subcellular location is the secreted. It localises to the cell wall. The enzyme catalyses Hydrolysis of alpha-D-Galp-(1-&gt;3)-L-Araf disaccharides from non-reducing terminals in branches of type II arabinogalactan attached to proteins.. Functionally, hydrolase involved in the degradation of the gum arabic arabinogalactan protein (AGP). Catalyzes the release of 3-O-alpha-D-galactopyranosyl-L-arabinose (alpha-D-Galp-(1-&gt;3)-L-Ara) from gum arabic AGP. Can also release 3-O-beta-L-arabinopyranosyl-L-arabinose (beta-L-Arap-(1-&gt;3)-L-Ara) from gum arabic AGP and larch AGP, but the alpha-D-Galp-(1-&gt;3)-L-Ara release activity is 594-fold higher than the beta-L-Arap-(1-&gt;3)-L-Ara release activity. Exhibits no reactivity toward p-nitrophenyl (pNP)-alpha-Araf or any other tested pNP substrate. Plays a crucial role in gum arabic AGP assimilation in B.longum. In Bifidobacterium longum subsp. longum, this protein is 3-O-alpha-D-galactosyl-alpha-L-arabinofuranosidase.